A 264-amino-acid polypeptide reads, in one-letter code: Tryptophan synthase alpha chain (264 aa).

Active-site proton acceptor residues include E49 and D60.

Belongs to the TrpA family. In terms of assembly, tetramer of two alpha and two beta chains.

The catalysed reaction is (1S,2R)-1-C-(indol-3-yl)glycerol 3-phosphate + L-serine = D-glyceraldehyde 3-phosphate + L-tryptophan + H2O. It participates in amino-acid biosynthesis; L-tryptophan biosynthesis; L-tryptophan from chorismate: step 5/5. Its function is as follows. The alpha subunit is responsible for the aldol cleavage of indoleglycerol phosphate to indole and glyceraldehyde 3-phosphate. This is Tryptophan synthase alpha chain from Geotalea daltonii (strain DSM 22248 / JCM 15807 / FRC-32) (Geobacter daltonii).